The chain runs to 810 residues: Janus kinase and microtubule-interacting protein 2 (810 aa).

3 coiled-coil regions span residues 13–102 (EALI…EMSR), 148–178 (ERLK…QADK), and 207–244 (RRLM…KEAL). The span at 261–274 (PKREIPGRAGDGSE) shows a compositional bias: basic and acidic residues. 2 disordered regions span residues 261–280 (PKRE…SSPD) and 437–465 (YDED…DDDL). Residues 280–419 (DLRRNQKRIA…REKLIRRRKH (140 aa)) are a coiled coil. 2 coiled-coil regions span residues 468 to 597 (SLAA…RERR) and 664 to 808 (EKWI…SNRK).

Belongs to the JAKMIP family. As to expression, highly expressed in brain, moderately expressed in thymus, spleen and lung, and weakly expressed in kidney, liver and peripheral blood lymphocytes. Also expressed in adrenal and pituitary glands, as well as testis.

It localises to the golgi apparatus. This is Janus kinase and microtubule-interacting protein 2 (JAKMIP2) from Homo sapiens (Human).